An 88-amino-acid polypeptide reads, in one-letter code: Alkene monooxygenase system, oxygenase component subunit gamma (88 aa).

The protein belongs to the TmoB/XamoB family. In terms of assembly, the alkene monooxygenase multicomponent enzyme system is composed of an electron transfer component and a monooxygenase component interacting with the effector protein XamoD. The electron transfer component is composed of a ferredoxin reductase (XamoF) and a ferredoxin (XamoC), and the monooxygenase component is formed by a heterohexamer (dimer of heterotrimers) of two alpha subunits (XamoA), two beta subunits (XamoE) and two gamma subunits (XamoB).

Its subcellular location is the cytoplasm. It catalyses the reaction propene + NADH + O2 + H(+) = 1,2-epoxypropane + NAD(+) + H2O. Inhibited by propyne. Functionally, component of the alkene monooxygenase multicomponent enzyme system which catalyzes the O2- and NADH-dependent epoxidation of short chain (C2 to C6) alkenes to their corresponding epoxides. Also able to catalyze the oxidation of a number of chlorinated alkenes, including trichloroethylene, cis- and trans-1,2-dichloroethylene, vinyl chloride, 1-chloropropylene, 1,3-dichloropropylene and 2,3-dichloropropylene. This is Alkene monooxygenase system, oxygenase component subunit gamma from Xanthobacter autotrophicus (strain ATCC BAA-1158 / Py2).